We begin with the raw amino-acid sequence, 505 residues long: Keratin, type II cuticular Hb1 (505 aa).

Residues 1 to 106 are head; that stretch reads MTCGSGFGGR…PNAQCVKQEE (106 aa). Positions 106–417 constitute an IF rod domain; sequence EKEQIKSLNS…RLLEGEEQRL (312 aa). The coil 1A stretch occupies residues 107–141; the sequence is KEQIKSLNSRFAAFIDKVRFLEQQNKLLETKLQFY. The tract at residues 142–151 is linker 1; that stretch reads QNRECCQSNL. Positions 152 to 252 are coil 1B; it reads EPLFEGYIET…YEEEILILQS (101 aa). Lysine 212 is covalently cross-linked (Glycyl lysine isopeptide (Lys-Gly) (interchain with G-Cter in SUMO1)). The segment at 253-269 is linker 12; the sequence is HISDTSVVVKLDNSRDL. The tract at residues 270–413 is coil 2; the sequence is NMDCIIAEIK…ATYRRLLEGE (144 aa). The segment at 414 to 505 is tail; it reads EQRLCEGIGA…GSCGSSCRKC (92 aa).

Belongs to the intermediate filament family. In terms of assembly, heterotetramer of two type I and two type II keratins. Abundantly expressed in the differentiating cortex of growing (anagen) hair. Expression is restricted to the keratinocytes of the hair cortex and is absent from inner root sheath and medulla. Expressed in malignant lymph node tissue in breast carcinoma tissue.

The polypeptide is Keratin, type II cuticular Hb1 (KRT81) (Homo sapiens (Human)).